The primary structure comprises 567 residues: MKRNISMFLQLLLIILMMISFLFTSLLVPSVSATTLNTISTCLINYKVSNFSVYPTRNHAGNSYYNLLDFSIQNLRFAACSKPKPTVIIVPESKEQLVSSVLCCRQGSYEIRVRCGGHSYEGTSSVSFDGSPFVVIDLMKLDGVSVDVDSETAWVQGGATLGQTYYAISRASNVHGFSAGSCPTVGVGGHISGGGYGFLSRKYGLAADNVVDALLVDAEGRLLDRKAMGEEIFWAIRGGGGGIWGIIYAWKIRLLKVPKTVTSFIIPRPGSKRYVSQLVHKWQLVAPKLEDEFYLSISMSSPSKGNIPIEINAQFSGFYLGTKTEAISILNEAFSELGVLEGDCKEMSWIESTLFFSELDDVANSSDVSRLKERYFENKSYFKAKSDYVKTPISVGGIMTALNVLEKEPNGHVILDPYGGAMQRISEEAIAFPHRKGNLFGIQYLVVWKEKDNNNIVKSNIGYIEWIREFYNTMAPHVSSSPRAAYVNYMDLDLGVMDDYLLPCTSTTASANHAVERARVWGEKYFLNNYDRLVKAKTKIDPLNVFRHQQGIPPLFASMQEYTYSSK.

A signal peptide spans 1–33 (MKRNISMFLQLLLIILMMISFLFTSLLVPSVSA). A disulfide bridge connects residues Cys42 and Cys103. N-linked (GlcNAc...) asparagine glycosylation occurs at Asn50. One can recognise an FAD-binding PCMH-type domain in the interval 81–257 (SKPKPTVIIV…YAWKIRLLKV (177 aa)). A Pros-8alpha-FAD histidine modification is found at His118. Asn364 and Asn378 each carry an N-linked (GlcNAc...) asparagine glycan.

It belongs to the oxygen-dependent FAD-linked oxidoreductase family. It depends on FAD as a cofactor. Mostly expressed in roots at low levels.

It is found in the vacuole. It participates in alkaloid biosynthesis; nicotine biosynthesis. Functionally, involved in the biosynthesis of pyridine alkaloid natural products, leading mainly to the production of anabasine, anatabine, nicotine and nornicotine, effective deterrents against herbivores with antiparasitic and pesticide properties (neurotoxins); nornicotine serves as the precursor in the synthesis of the carcinogen compound N'-nitrosonornicotine (NNN). Catalyzes a late oxidation step subsequent to the pyridine ring condensation reaction in the biosynthesis of alkaloids. The sequence is that of Berberine bridge enzyme-like D-1 from Nicotiana tabacum (Common tobacco).